Reading from the N-terminus, the 251-residue chain is Adenosylcobinamide-GDP ribazoletransferase (251 aa).

7 helical membrane passes run 36-56 (LYPF…FVLS), 60-80 (VPIM…TGFL), 110-130 (VGAF…AGMF), 141-161 (ILIF…VSQE), 181-201 (EIIL…TLGI), 202-222 (NYLI…LKVK), and 231-251 (DVAG…LGII).

This sequence belongs to the CobS family. Requires Mg(2+) as cofactor.

The protein localises to the cell membrane. The catalysed reaction is alpha-ribazole + adenosylcob(III)inamide-GDP = adenosylcob(III)alamin + GMP + H(+). It catalyses the reaction alpha-ribazole 5'-phosphate + adenosylcob(III)inamide-GDP = adenosylcob(III)alamin 5'-phosphate + GMP + H(+). Its pathway is cofactor biosynthesis; adenosylcobalamin biosynthesis; adenosylcobalamin from cob(II)yrinate a,c-diamide: step 7/7. Joins adenosylcobinamide-GDP and alpha-ribazole to generate adenosylcobalamin (Ado-cobalamin). Also synthesizes adenosylcobalamin 5'-phosphate from adenosylcobinamide-GDP and alpha-ribazole 5'-phosphate. The chain is Adenosylcobinamide-GDP ribazoletransferase from Clostridium perfringens (strain ATCC 13124 / DSM 756 / JCM 1290 / NCIMB 6125 / NCTC 8237 / Type A).